The following is a 258-amino-acid chain: Heat-labile enterotoxin A chain (258 aa).

An N-terminal signal peptide occupies residues 1–18 (MKNITFIFFILLASPLYA). Residue 25 to 39 (RADSRPPDEIKRSGG) participates in NAD(+) binding. The active site involves glutamate 130. Cysteine 205 and cysteine 217 are disulfide-bonded.

It belongs to the enterotoxin A family. As to quaternary structure, heterohexamer of one A chain and of five B chains.

Its function is as follows. The biological activity of the toxin is produced by the A chain, which activates intracellular adenyl cyclase. The polypeptide is Heat-labile enterotoxin A chain (eltA) (Escherichia coli).